The following is a 107-amino-acid chain: Putative double-stranded DNA mimic protein YpsIP31758_1954 (107 aa).

It belongs to the putative dsDNA mimic protein family.

Its function is as follows. May act as a double-stranded DNA (dsDNA) mimic. Probably regulates the activity of a dsDNA-binding protein. This is Putative double-stranded DNA mimic protein YpsIP31758_1954 from Yersinia pseudotuberculosis serotype O:1b (strain IP 31758).